Reading from the N-terminus, the 102-residue chain is Small ribosomal subunit protein uS10 (102 aa).

A disordered region spans residues 34-61 (MAGPIPLPTKTLKVTTRKSTDGEGSSSF).

The protein belongs to the universal ribosomal protein uS10 family. As to quaternary structure, part of the 30S ribosomal subunit.

Its function is as follows. Involved in the binding of tRNA to the ribosomes. The sequence is that of Small ribosomal subunit protein uS10 from Methanococcus aeolicus (strain ATCC BAA-1280 / DSM 17508 / OCM 812 / Nankai-3).